A 158-amino-acid chain; its full sequence is Ribonuclease H (158 aa).

An RNase H type-1 domain is found at 3–144 (ELKLIHIFTD…CDQLARAAAE (142 aa)). Aspartate 12, glutamate 50, aspartate 72, and aspartate 136 together coordinate Mg(2+).

The protein belongs to the RNase H family. Monomer. The cofactor is Mg(2+).

The protein resides in the cytoplasm. It catalyses the reaction Endonucleolytic cleavage to 5'-phosphomonoester.. Its function is as follows. Endonuclease that specifically degrades the RNA of RNA-DNA hybrids. In Shewanella sp. (strain MR-7), this protein is Ribonuclease H.